Consider the following 516-residue polypeptide: GMP synthase [glutamine-hydrolyzing] (516 aa).

Residues 8-198 (KILILDFGSQ…ALNICKCDAL (191 aa)) enclose the Glutamine amidotransferase type-1 domain. Cysteine 84 acts as the Nucleophile in catalysis. Catalysis depends on residues histidine 172 and glutamate 174. The GMPS ATP-PPase domain occupies 199-391 (WNIENIIEND…LGLPYNMLYR (193 aa)). An ATP-binding site is contributed by 226–232 (SGGVDSS).

Homodimer.

It catalyses the reaction XMP + L-glutamine + ATP + H2O = GMP + L-glutamate + AMP + diphosphate + 2 H(+). The protein operates within purine metabolism; GMP biosynthesis; GMP from XMP (L-Gln route): step 1/1. Catalyzes the synthesis of GMP from XMP. This Francisella philomiragia subsp. philomiragia (strain ATCC 25017 / CCUG 19701 / FSC 153 / O#319-036) protein is GMP synthase [glutamine-hydrolyzing].